The primary structure comprises 469 residues: Putative dipeptidase SE_1424 (469 aa).

Zn(2+) is bound at residue H84. D86 is a catalytic residue. D115 contributes to the Zn(2+) binding site. Catalysis depends on E149, which acts as the Proton acceptor. Residues E150, D173, and H440 each coordinate Zn(2+).

This sequence belongs to the peptidase M20A family. It depends on Zn(2+) as a cofactor.

The sequence is that of Putative dipeptidase SE_1424 from Staphylococcus epidermidis (strain ATCC 12228 / FDA PCI 1200).